A 318-amino-acid polypeptide reads, in one-letter code: L-lactate dehydrogenase (318 aa).

NAD(+)-binding positions include V18, D39, K44, Y69, and 83-84 (GA). Substrate is bound by residues Q86 and R92. Residues S105, 122 to 124 (VSN), and S147 contribute to the NAD(+) site. Residue 124-127 (NPVD) participates in substrate binding. 152-155 (DTSR) provides a ligand contact to substrate. The active-site Proton acceptor is H179. Residue Y225 is modified to Phosphotyrosine. Substrate is bound at residue T234.

The protein belongs to the LDH/MDH superfamily. LDH family. In terms of assembly, homotetramer.

The protein resides in the cytoplasm. The enzyme catalyses (S)-lactate + NAD(+) = pyruvate + NADH + H(+). The protein operates within fermentation; pyruvate fermentation to lactate; (S)-lactate from pyruvate: step 1/1. Its function is as follows. Catalyzes the conversion of lactate to pyruvate. This is L-lactate dehydrogenase from Clostridium botulinum (strain 657 / Type Ba4).